The chain runs to 473 residues: JmjC domain-containing protein 4 (473 aa).

One can recognise a JmjC domain in the interval 140–433 (PTDGLLTDFS…DFDHPYLDRN (294 aa)). Residues 452 to 473 (TNKKNEKRPAEDDSPSQKKTCQ) form a disordered region.

It is found in the nucleus. In terms of biological role, has a role in meiosis. The polypeptide is JmjC domain-containing protein 4 (jmj4) (Schizosaccharomyces pombe (strain 972 / ATCC 24843) (Fission yeast)).